The chain runs to 252 residues: Cytochrome b6-f complex iron-sulfur subunit, chloroplastic (252 aa).

The helical transmembrane segment at 94–114 (LVLAAVAPVVASAGGCYLYYF) threads the bilayer. A Rieske domain is found at 141–235 (WFKSHKKNAR…VEDDNGKILL (95 aa)). 4 residues coordinate [2Fe-2S] cluster: Cys-181, His-183, Cys-199, and His-202. Cysteines 186 and 201 form a disulfide.

Belongs to the Rieske iron-sulfur protein family. As to quaternary structure, the 4 large subunits of the cytochrome b6-f complex are cytochrome b6, subunit IV (17 kDa polypeptide, petD), cytochrome f and the Rieske protein, while the 4 small subunits are petG, petL, petM and petN. The complex functions as a dimer. [2Fe-2S] cluster is required as a cofactor.

Its subcellular location is the plastid. The protein resides in the chloroplast thylakoid membrane. The catalysed reaction is 2 oxidized [plastocyanin] + a plastoquinol + 2 H(+)(in) = 2 reduced [plastocyanin] + a plastoquinone + 4 H(+)(out). Functionally, component of the cytochrome b6-f complex, which mediates electron transfer between photosystem II (PSII) and photosystem I (PSI), cyclic electron flow around PSI, and state transitions. The polypeptide is Cytochrome b6-f complex iron-sulfur subunit, chloroplastic (petC) (Bigelowiella natans (Pedinomonas minutissima)).